The following is a 102-amino-acid chain: Defensin (102 aa).

The first 25 residues, 1-25 (MKCATIVCTIAVVLAATLLNGSVQA), serve as a signal peptide directing secretion. Positions 26-62 (APQEEAALSGGANLNTLLDELPEETHHAALENYRAKR) are excised as a propeptide. 3 disulfide bridges follow: cysteine 65/cysteine 92, cysteine 78/cysteine 98, and cysteine 82/cysteine 100.

The protein belongs to the invertebrate defensin family. Type 1 subfamily.

The protein resides in the secreted. In terms of biological role, responsible for the anti Gram-positive activity of immune hemolymph. The sequence is that of Defensin (Def1) from Anopheles gambiae (African malaria mosquito).